We begin with the raw amino-acid sequence, 249 residues long: MAAGSTIDALGQFELHPVLGHLGEALRFSQSPLFMLIAAAVVLVFLYVGMRPAAVVPGRLQAAAEISYDFVHDLAVSTIGENGATFFPFVFAIFFFILAGNYLGLLPFSFTYTSHIAVTFGLAIMVFIISILASIRFQGVGFLKHFLPAGTPVWLAPLLVPIEIISFLSRPVSLSIRLFANMVAGHVLLEVFAGFTIMLAGLGAFGHVLAIAPIAINIALTALELLVGVLQAYVFAILTCIYLREAVAH.

The next 6 membrane-spanning stretches (helical) occupy residues 30-50 (QSPL…YVGM), 86-106 (FFPF…LGLL), 115-135 (HIAV…LASI), 146-166 (FLPA…EIIS), 191-211 (VFAG…VLAI), and 218-238 (IALT…FAIL).

The protein belongs to the ATPase A chain family. In terms of assembly, F-type ATPases have 2 components, CF(1) - the catalytic core - and CF(0) - the membrane proton channel. CF(1) has five subunits: alpha(3), beta(3), gamma(1), delta(1), epsilon(1). CF(0) has three main subunits: a(1), b(2) and c(9-12). The alpha and beta chains form an alternating ring which encloses part of the gamma chain. CF(1) is attached to CF(0) by a central stalk formed by the gamma and epsilon chains, while a peripheral stalk is formed by the delta and b chains.

It localises to the cell inner membrane. Key component of the proton channel; it plays a direct role in the translocation of protons across the membrane. In Gluconobacter oxydans (strain 621H) (Gluconobacter suboxydans), this protein is ATP synthase subunit a.